Here is a 75-residue protein sequence, read N- to C-terminus: uncharacterized protein (75 aa).

The chain crosses the membrane as a helical span at residues 7–26; that stretch reads ATAPLFVIVGLAVVLTGATG.

The protein localises to the membrane. This is an uncharacterized protein from Dictyostelium discoideum (Social amoeba).